A 115-amino-acid chain; its full sequence is NADH-ubiquinone oxidoreductase chain 3 (115 aa).

3 helical membrane passes run 4–24 (FMAL…AFWL), 55–75 (FFLV…LLPL), and 87–107 (MMLT…YEWV).

This sequence belongs to the complex I subunit 3 family. In terms of assembly, core subunit of respiratory chain NADH dehydrogenase (Complex I) which is composed of 45 different subunits. Interacts with TMEM186. Interacts with TMEM242.

The protein resides in the mitochondrion inner membrane. The enzyme catalyses a ubiquinone + NADH + 5 H(+)(in) = a ubiquinol + NAD(+) + 4 H(+)(out). Core subunit of the mitochondrial membrane respiratory chain NADH dehydrogenase (Complex I) which catalyzes electron transfer from NADH through the respiratory chain, using ubiquinone as an electron acceptor. Essential for the catalytic activity of complex I. In Osgoodomys banderanus (Michoacan deer mouse), this protein is NADH-ubiquinone oxidoreductase chain 3.